The primary structure comprises 579 residues: Pre-mRNA-processing factor 17 (579 aa).

Residues 1–19 are compositionally biased toward low complexity; the sequence is MSAAIAALAASYGSGSGSE. 2 disordered regions span residues 1–34 and 204–237; these read MSAA…LPAA and DVAK…PGEE. WD repeat units follow at residues 286-326, 330-369, 371-413, 416-455, 459-498, 504-545, and 548-578; these read GHTK…RCLR, GHSK…CISR, TNRK…IVQE, RHLG…DFKY, PSMH…RLNK, GHMV…LYSR, and AHDK…IKLW.

As to quaternary structure, component of the catalytic spliceosome C complexes. Component of the postcatalytic spliceosome P complex. Interacts with PPIL1; this interaction leads to CDC40 isomerization. Undergoes isomerization of the peptide bond between Gly-94 and Pro-95. The reaction is catalyzed by PPIL1.

It localises to the nucleus. The protein resides in the nucleus speckle. Functionally, required for pre-mRNA splicing as component of the activated spliceosome. Plays an important role in embryonic brain development; this function does not require proline peptide bond isomerization. This is Pre-mRNA-processing factor 17 (Cdc40) from Mus musculus (Mouse).